Reading from the N-terminus, the 78-residue chain is Large ribosomal subunit protein bL28 (78 aa).

The interval 1–20 (MSRVCQVTGKRPAVGNNRSH) is disordered.

This sequence belongs to the bacterial ribosomal protein bL28 family.

In Actinobacillus succinogenes (strain ATCC 55618 / DSM 22257 / CCUG 43843 / 130Z), this protein is Large ribosomal subunit protein bL28.